Here is a 278-residue protein sequence, read N- to C-terminus: HTH-type transcriptional regulator HdfR (278 aa).

The 58-residue stretch at 1–58 (MDTELLKTFLEVSRTRHFGRAAEALYLTQSAVSFRIRQLENQLGVNLFTRHRNNIRLT) folds into the HTH lysR-type domain. The H-T-H motif DNA-binding region spans 18-37 (FGRAAEALYLTQSAVSFRIR).

Belongs to the LysR transcriptional regulatory family.

Its function is as follows. Negatively regulates the transcription of the flagellar master operon flhDC by binding to the upstream region of the operon. In Salmonella newport (strain SL254), this protein is HTH-type transcriptional regulator HdfR.